The chain runs to 81 residues: D-alanyl carrier protein (81 aa).

The Carrier domain maps to methionine 1 to glutamine 81. Serine 39 bears the O-(pantetheine 4'-phosphoryl)serine mark.

It belongs to the DltC family. Post-translationally, 4'-phosphopantetheine is transferred from CoA to a specific serine of apo-DCP.

The protein resides in the cytoplasm. Its pathway is cell wall biogenesis; lipoteichoic acid biosynthesis. Carrier protein involved in the D-alanylation of lipoteichoic acid (LTA). The loading of thioester-linked D-alanine onto DltC is catalyzed by D-alanine--D-alanyl carrier protein ligase DltA. The DltC-carried D-alanyl group is further transferred to cell membrane phosphatidylglycerol (PG) by forming an ester bond, probably catalyzed by DltD. D-alanylation of LTA plays an important role in modulating the properties of the cell wall in Gram-positive bacteria, influencing the net charge of the cell wall. The sequence is that of D-alanyl carrier protein from Lacticaseibacillus casei (strain BL23) (Lactobacillus casei).